The following is a 156-amino-acid chain: Small ribosomal subunit protein uS7 (156 aa).

This sequence belongs to the universal ribosomal protein uS7 family. Part of the 30S ribosomal subunit. Contacts proteins S9 and S11.

Its function is as follows. One of the primary rRNA binding proteins, it binds directly to 16S rRNA where it nucleates assembly of the head domain of the 30S subunit. Is located at the subunit interface close to the decoding center, probably blocks exit of the E-site tRNA. The polypeptide is Small ribosomal subunit protein uS7 (Azoarcus sp. (strain BH72)).